The chain runs to 218 residues: LexA repressor (218 aa).

The segment at residues 28-48 (RAEIAAEFGFSSPNAAEEHLR) is a DNA-binding region (H-T-H motif). Catalysis depends on for autocatalytic cleavage activity residues serine 136 and lysine 173.

It belongs to the peptidase S24 family. As to quaternary structure, homodimer.

The catalysed reaction is Hydrolysis of Ala-|-Gly bond in repressor LexA.. Functionally, represses a number of genes involved in the response to DNA damage (SOS response), including recA and lexA. In the presence of single-stranded DNA, RecA interacts with LexA causing an autocatalytic cleavage which disrupts the DNA-binding part of LexA, leading to derepression of the SOS regulon and eventually DNA repair. This is LexA repressor from Cupriavidus pinatubonensis (strain JMP 134 / LMG 1197) (Cupriavidus necator (strain JMP 134)).